A 139-amino-acid polypeptide reads, in one-letter code: MIIGIGSDLIDITRIAKVIERHGERFLDRIFTETERARAGRRDKQPNLVAATYAKRFAAKEACSKALGTGIRQGVWWRDMGVVNLPGGRPTMALTGGAKARLDALTPAGMIAQIDLSITDEWPLAQAFVVISAIPATAS.

Residues D8 and E61 each contribute to the Mg(2+) site.

This sequence belongs to the P-Pant transferase superfamily. AcpS family. The cofactor is Mg(2+).

The protein localises to the cytoplasm. It carries out the reaction apo-[ACP] + CoA = holo-[ACP] + adenosine 3',5'-bisphosphate + H(+). Transfers the 4'-phosphopantetheine moiety from coenzyme A to a Ser of acyl-carrier-protein. The chain is Holo-[acyl-carrier-protein] synthase from Rhodopseudomonas palustris (strain BisB5).